The chain runs to 523 residues: GMP synthase [glutamine-hydrolyzing] (523 aa).

One can recognise a Glutamine amidotransferase type-1 domain in the interval 8–205 (KILILDFGSQ…VVNICGCTTN (198 aa)). Residue cysteine 85 is the Nucleophile of the active site. Residues histidine 179 and glutamate 181 contribute to the active site. Positions 206–398 (WTPENIIEDA…LGLPAEMLNR (193 aa)) constitute a GMPS ATP-PPase domain. An ATP-binding site is contributed by 233–239 (SGGVDSS).

In terms of assembly, homodimer.

It catalyses the reaction XMP + L-glutamine + ATP + H2O = GMP + L-glutamate + AMP + diphosphate + 2 H(+). Its pathway is purine metabolism; GMP biosynthesis; GMP from XMP (L-Gln route): step 1/1. Catalyzes the synthesis of GMP from XMP. This chain is GMP synthase [glutamine-hydrolyzing], found in Mannheimia succiniciproducens (strain KCTC 0769BP / MBEL55E).